Here is a 606-residue protein sequence, read N- to C-terminus: Arginine--tRNA ligase (606 aa).

The short motif at 126–136 (PNTNKPLHLGH) is the 'HIGH' region element.

This sequence belongs to the class-I aminoacyl-tRNA synthetase family. In terms of assembly, monomer.

It is found in the cytoplasm. The catalysed reaction is tRNA(Arg) + L-arginine + ATP = L-arginyl-tRNA(Arg) + AMP + diphosphate. This is Arginine--tRNA ligase from Phocaeicola vulgatus (strain ATCC 8482 / DSM 1447 / JCM 5826 / CCUG 4940 / NBRC 14291 / NCTC 11154) (Bacteroides vulgatus).